The sequence spans 501 residues: NAD(P)H-quinone oxidoreductase chain 4, chloroplastic (501 aa).

The next 14 membrane-spanning stretches (helical) occupy residues 4–24 (FPWL…IPFF), 35–55 (YTLG…CYYF), 87–107 (IGLI…AWPV), 113–133 (LFYF…ASQD), 134–154 (ILLF…LLCI), 167–187 (FILY…TMGF), 211–231 (IILY…FPLH), 242–262 (HYST…YGLI), 274–294 (SIFA…AALI), 310–330 (ISHM…GLNG), 331–351 (AILQ…LAGI), 386–406 (LALP…GIVV), 416–436 (ILVT…LLSM), and 464–484 (IFIL…PNSV).

The protein belongs to the complex I subunit 4 family.

It is found in the plastid. The protein resides in the chloroplast thylakoid membrane. It catalyses the reaction a plastoquinone + NADH + (n+1) H(+)(in) = a plastoquinol + NAD(+) + n H(+)(out). It carries out the reaction a plastoquinone + NADPH + (n+1) H(+)(in) = a plastoquinol + NADP(+) + n H(+)(out). The protein is NAD(P)H-quinone oxidoreductase chain 4, chloroplastic of Physcomitrium patens (Spreading-leaved earth moss).